Consider the following 124-residue polypeptide: UPF0102 protein HEAR0176 (124 aa).

This sequence belongs to the UPF0102 family.

In Herminiimonas arsenicoxydans, this protein is UPF0102 protein HEAR0176.